Consider the following 115-residue polypeptide: Ribonuclease P protein component (115 aa).

This sequence belongs to the RnpA family. As to quaternary structure, consists of a catalytic RNA component (M1 or rnpB) and a protein subunit.

It catalyses the reaction Endonucleolytic cleavage of RNA, removing 5'-extranucleotides from tRNA precursor.. Its function is as follows. RNaseP catalyzes the removal of the 5'-leader sequence from pre-tRNA to produce the mature 5'-terminus. It can also cleave other RNA substrates such as 4.5S RNA. The protein component plays an auxiliary but essential role in vivo by binding to the 5'-leader sequence and broadening the substrate specificity of the ribozyme. The sequence is that of Ribonuclease P protein component from Bacillus cereus (strain AH187).